The chain runs to 522 residues: Paraspeckle component 1 (522 aa).

M1 carries the N-acetylmethionine modification. RRM domains follow at residues 81–153 (CRLF…FATH) and 155–236 (AALT…PMEQ). A sufficient for paraspeckles localization region spans residues 124–357 (ESRTLAEIAK…QLRHEEEHRR (234 aa)). The interval 230-357 (IVEPMEQFDD…QLRHEEEHRR (128 aa)) is sufficient for perinucleolar caps localization and interaction with NONO. A coiled-coil region spans residues 282 to 376 (DEMEKQQREQ…EQEELRRQQE (95 aa)). S408, S472, and S476 each carry phosphoserine. The tract at residues 459 to 522 (GAVHNDRFPQ…FEGPNKRRRY (64 aa)) is disordered. The segment covering 471–489 (PSQMGSPMGNRTGSETPQA) has biased composition (polar residues). Positions 497 to 513 (VSGGPGGFGRGSQGGNF) are enriched in gly residues. The residue at position 506 (R506) is an Omega-N-methylarginine. S508 carries the post-translational modification Phosphoserine.

This sequence belongs to the PSPC family. Forms heterodimers with NONO; this involves formation of a coiled coil domain by helices from both proteins. Found in a RNP complex with CAT2 transcribed nuclear RNA (CTN-RNA). Interaction with NONO is required for its targeting to paraspeckles and perinucleolar caps. Interacts with SFPQ. Part of the HDP-RNP complex composed of at least HEXIM1, PRKDC, XRCC5, XRCC6, paraspeckle proteins (SFPQ, NONO, PSPC1, RBM14, and MATR3) and NEAT1 RNA. Interacts with ALKBH5 (when acetylated); interaction with acetylated ALKBH5 facilitates recognition of N(6)-methyladenosine (m6A) RNAs.

It localises to the nucleus speckle. It is found in the nucleus. The protein resides in the nucleolus. Its subcellular location is the nucleus matrix. The protein localises to the cytoplasm. In terms of biological role, RNA-binding protein required for the formation of nuclear paraspeckles. Binds to poly(A), poly(G) and poly(U) RNA homopolymers. Regulates, cooperatively with NONO and SFPQ, androgen receptor-mediated gene transcription activity in Sertoli cell line. Regulates the circadian clock by repressing the transcriptional activator activity of the CLOCK-BMAL1 heterodimer. Plays a role in the regulation of DNA virus-mediated innate immune response by assembling into the HDP-RNP complex, a complex that serves as a platform for IRF3 phosphorylation and subsequent innate immune response activation through the cGAS-STING pathway. This Rattus norvegicus (Rat) protein is Paraspeckle component 1 (Pspc1).